Consider the following 508-residue polypeptide: Lysine--tRNA ligase (508 aa).

Positions 418 and 425 each coordinate Mg(2+).

Belongs to the class-II aminoacyl-tRNA synthetase family. Homodimer. Mg(2+) is required as a cofactor.

It localises to the cytoplasm. The catalysed reaction is tRNA(Lys) + L-lysine + ATP = L-lysyl-tRNA(Lys) + AMP + diphosphate. In Burkholderia thailandensis (strain ATCC 700388 / DSM 13276 / CCUG 48851 / CIP 106301 / E264), this protein is Lysine--tRNA ligase.